A 353-amino-acid chain; its full sequence is Type 2 DNA topoisomerase 6 subunit A (353 aa).

One can recognise a Topo IIA-type catalytic domain in the interval asparagine 2–alanine 138. The active-site O-(5'-phospho-DNA)-tyrosine intermediate is tyrosine 96. Positions 186 and 238 each coordinate Mg(2+).

Belongs to the TOP6A family. In terms of assembly, homodimer. Heterotetramer of two Top6A and two Top6B chains. Mg(2+) is required as a cofactor.

The catalysed reaction is ATP-dependent breakage, passage and rejoining of double-stranded DNA.. In terms of biological role, relaxes both positive and negative superturns and exhibits a strong decatenase activity. This Methanothermobacter thermautotrophicus (strain ATCC 29096 / DSM 1053 / JCM 10044 / NBRC 100330 / Delta H) (Methanobacterium thermoautotrophicum) protein is Type 2 DNA topoisomerase 6 subunit A.